Consider the following 145-residue polypeptide: Basic phospholipase A2 cPm08 (145 aa).

The signal sequence occupies residues 1 to 21 (MYPAHLLVLLAVCVSLLGASA). Residues 22–27 (IPPLPL) constitute a propeptide that is removed on maturation. Disulfide bonds link cysteine 38–cysteine 98, cysteine 54–cysteine 144, cysteine 56–cysteine 72, cysteine 71–cysteine 125, cysteine 78–cysteine 118, cysteine 87–cysteine 111, and cysteine 105–cysteine 116. Residues tyrosine 55, glycine 57, and glycine 59 each contribute to the Ca(2+) site. The active site involves histidine 75. Aspartate 76 is a binding site for Ca(2+). The active site involves aspartate 119.

This sequence belongs to the phospholipase A2 family. Group I subfamily. D49 sub-subfamily. It depends on Ca(2+) as a cofactor. In terms of tissue distribution, expressed by the venom gland.

It localises to the secreted. The catalysed reaction is a 1,2-diacyl-sn-glycero-3-phosphocholine + H2O = a 1-acyl-sn-glycero-3-phosphocholine + a fatty acid + H(+). Functionally, PLA2 catalyzes the calcium-dependent hydrolysis of the 2-acyl groups in 3-sn-phosphoglycerides. The protein is Basic phospholipase A2 cPm08 of Laticauda semifasciata (Black-banded sea krait).